Reading from the N-terminus, the 579-residue chain is Folliculin (579 aa).

Residues 32 to 82 form a disordered region; sequence GAGSGDSPGQVEQAEEEEGGIQMSSRVRAHSPAEGASTDSSSPGPKKSDMC. S62 and S73 each carry phosphoserine. The 157-residue stretch at 86-242 folds into the uDENN FLCN/SMCR8-type domain; the sequence is RSLAVGHPGY…RNGNAARSLT (157 aa). Positions 287-310 form a coiled coil; the sequence is EKLADLEEESESWDNSEAEEEEKA. Residues 294–308 show a composition bias toward acidic residues; it reads EESESWDNSEAEEEE. Residues 294–320 form a disordered region; it reads EESESWDNSEAEEEEKAPATAEGAEGR. Phosphoserine occurs at positions 302, 406, 537, 542, and 571. Positions 339 to 491 constitute a cDENN FLCN/SMCR8-type domain; sequence QPPKLSVFKS…ILNKMEAALT (153 aa). Residues 493-558 form the dDENN FLCN/SMCR8-type domain; the sequence is QNLSVDVVDQ…LLKFWMTGLS (66 aa).

The protein belongs to the folliculin family. In terms of assembly, interacts (via C-terminus) with FNIP1 or FNIP2 (via C-terminus). Component of the lysosomal folliculin complex (LFC), composed of FLCN, FNIP1 (or FNIP2), RagA/RRAGA or RagB/RRAGB GDP-bound, RagC/RRAGC or RagD/RRAGD GTP-bound, and Ragulator. Interaction with FNIP1 or FNIP2 mediates indirect interaction with the PRKAA1, PRKAB1 and PRKAG1 subunits of 5'-AMP-activated protein kinase (AMPK). Interacts with HSP90AA1 in the presence of FNIP1. Interacts with HSP70, STUB1, CDC37, AHSA1, CCT2, STIP1, PTGES3 and PPP5C. Interacts with GABARAP; interaction takes place in the presence of FNIP1 and/or FNIP2. Interacts with RILP; the interaction is direct and promotes association between RILP and RAB34. Interacts with KIF3A and KIF3B. Interacts with lactate dehydrogenase LDHA, but not LDHB; the interaction is direct, may preferentially bind LDHA dimers rather than tetramers, and regulates LDHA activity, acting as an uncompetitive inhibitor. Phosphorylation by ULK1 modulates the interaction with GABARAP and is required to regulate autophagy. Expressed in kidney.

It localises to the lysosome membrane. The protein localises to the cytoplasm. Its subcellular location is the cytosol. It is found in the cell projection. The protein resides in the cilium. It localises to the cytoskeleton. The protein localises to the microtubule organizing center. Its subcellular location is the centrosome. It is found in the spindle. The protein resides in the nucleus. Its activity is regulated as follows. GTPase-activating activity is inhibited in the folliculin complex (LFC), which stabilizes the GDP-bound state of RagA/RRAGA (or RagB/RRAGB), because Arg-164 is located far from the RagC/RRAGC or RagD/RRAGD nucleotide pocket. Disassembly of the LFC complex upon amino acid restimulation liberates the GTPase-activating activity. In terms of biological role, multi-functional protein, involved in both the cellular response to amino acid availability and in the regulation of glycolysis. GTPase-activating protein that plays a key role in the cellular response to amino acid availability through regulation of the non-canonical mTORC1 signaling cascade controlling the MiT/TFE factors TFEB and TFE3. Activates mTORC1 by acting as a GTPase-activating protein: specifically stimulates GTP hydrolysis by RagC/RRAGC or RagD/RRAGD, promoting the conversion to the GDP-bound state of RagC/RRAGC or RagD/RRAGD, and thereby activating the kinase activity of mTORC1. The GTPase-activating activity is inhibited during starvation and activated in presence of nutrients. Acts as a key component for non-canonical mTORC1-dependent control of the MiT/TFE factors TFEB and TFE3, while it is not involved in mTORC1-dependent phosphorylation of canonical RPS6KB1/S6K1 and EIF4EBP1/4E-BP1. In low-amino acid conditions, the lysosomal folliculin complex (LFC) is formed on the membrane of lysosomes, which inhibits the GTPase-activating activity of FLCN, inactivates mTORC1 and maximizes nuclear translocation of TFEB and TFE3. Upon amino acid restimulation, RagA/RRAGA (or RagB/RRAGB) nucleotide exchange promotes disassembly of the LFC complex and liberates the GTPase-activating activity of FLCN, leading to activation of mTORC1 and subsequent cytoplasmic retention of TFEB and TFE3. Indirectly acts as a positive regulator of Wnt signaling by promoting mTOR-dependent cytoplasmic retention of MiT/TFE factor TFE3. Required for the exit of hematopoietic stem cell from pluripotency by promoting mTOR-dependent cytoplasmic retention of TFE3, thereby increasing Wnt signaling. Involved in the control of embryonic stem cells differentiation; together with LAMTOR1 it is necessary to recruit and activate RagC/RRAGC and RagD/RRAGD at the lysosomes, and to induce exit of embryonic stem cells from pluripotency via non-canonical, mTOR-independent TFE3 inactivation. Acts as an inhibitor of browning of adipose tissue by regulating mTOR-dependent cytoplasmic retention of TFE3. In response to flow stress, regulates STK11/LKB1 accumulation and mTORC1 activation through primary cilia: may act by recruiting STK11/LKB1 to primary cilia for activation of AMPK resided at basal bodies, causing mTORC1 down-regulation. Together with FNIP1 and/or FNIP2, regulates autophagy: following phosphorylation by ULK1, interacts with GABARAP and promotes autophagy. Required for starvation-induced perinuclear clustering of lysosomes by promoting association of RILP with its effector RAB34. Regulates glycolysis by binding to lactate dehydrogenase LDHA, acting as an uncompetitive inhibitor. The protein is Folliculin of Rattus norvegicus (Rat).